Consider the following 596-residue polypeptide: Elongation factor 4 (596 aa).

In terms of domain architecture, tr-type G spans 2–184 (KNIRNFAIIA…SIVKYIPPPE (183 aa)). GTP-binding positions include 14-19 (DHGKST) and 131-134 (NKID).

It belongs to the TRAFAC class translation factor GTPase superfamily. Classic translation factor GTPase family. LepA subfamily.

It is found in the cell inner membrane. It carries out the reaction GTP + H2O = GDP + phosphate + H(+). Required for accurate and efficient protein synthesis under certain stress conditions. May act as a fidelity factor of the translation reaction, by catalyzing a one-codon backward translocation of tRNAs on improperly translocated ribosomes. Back-translocation proceeds from a post-translocation (POST) complex to a pre-translocation (PRE) complex, thus giving elongation factor G a second chance to translocate the tRNAs correctly. Binds to ribosomes in a GTP-dependent manner. This chain is Elongation factor 4, found in Neorickettsia sennetsu (strain ATCC VR-367 / Miyayama) (Ehrlichia sennetsu).